Here is a 399-residue protein sequence, read N- to C-terminus: Delta(12) acyl-lipid conjugase (11E,13E-forming) (399 aa).

A disordered region spans residues 11 to 30; it reads RNGGGPKKKMGPGQGLGPGE. 2 consecutive transmembrane segments (helical) span residues 61–81 and 93–113; these read FSYL…ADTY and LAWP…WGIA. Positions 114 to 118 match the Histidine box-1 motif; sequence HDCGH. Residues 126 to 146 form a helical membrane-spanning segment; the sequence is LVDDVVGFLIHSLVFVPYFSF. The short motif at 150–154 is the Histidine box-2 element; the sequence is HRRHH. Transmembrane regions (helical) follow at residues 188–208, 232–252, and 258–278; these read VFII…FNIS, VLVH…YRIA, and GWLI…VVLI. Positions 325–329 match the Histidine box-3 motif; the sequence is HVVHH.

Belongs to the fatty acid desaturase type 1 family. Expressed in developing seeds, but not in leaves.

It is found in the membrane. The enzyme catalyses a (9Z,12Z)-octadecadienoyl-containing glycerolipid + 2 Fe(II)-[cytochrome b5] + O2 + 2 H(+) = a (9Z,11E,13E)-octadecatrienoyl-containing glycerolipid + 2 Fe(III)-[cytochrome b5] + 2 H2O. It carries out the reaction (9Z,12Z,15Z)-octadecatrienoyl-containing glycerolipid + 2 Fe(II)-[cytochrome b5] + O2 + 2 H(+) = a (9Z,11E,13E,15Z)-octadecatetraenoyl-containing glycerolipid + 2 Fe(III)-[cytochrome b5] + 2 H2O. The protein operates within lipid metabolism; polyunsaturated fatty acid biosynthesis. Converts linoleic acid to alpha-eleostearic acid (18:3(9Z,11E,13E)) and alpha-linolenic acid to alpha-parinaric acid (18:4(9Z,11E, 13E, 15Z)). Converts a single cis double bond at carbon 12 to two conjugated trans bonds at positions 11 and 13. The chain is Delta(12) acyl-lipid conjugase (11E,13E-forming) from Momordica charantia (Bitter gourd).